A 383-amino-acid chain; its full sequence is Ovalbumin (383 aa).

The residue at position 2 (glycine 2) is an N-acetylglycine. The segment at residues 22 to 48 (HHANDNMLYSPFAILSTLAMVFLGAKD) is a signal peptide (not cleaved). The residue at position 69 (serine 69) is a Phosphoserine. Cysteines 74 and 121 form a disulfide. 2 N-linked (GlcNAc...) asparagine glycosylation sites follow: asparagine 293 and asparagine 312. Serine 345 is modified (phosphoserine).

This sequence belongs to the serpin family. Ov-serpin subfamily. Post-translationally, the signal sequence is not cleaved. The functional signal for membrane translocation of ovalbumin becomes accessible when the nascent chain is 50 to 60 residues long. The hydrophobic sequence which lies between residues 27 and 43 folds back on the preceding residues to form an amphipathic hairpin structure which is the signal element recognized by the membrane. As to expression, major protein of egg white.

It localises to the secreted. Storage protein of egg white. Lack protease inhibitory activity. This is Ovalbumin (SERPINB14) from Coturnix coturnix (Common quail).